A 477-amino-acid chain; its full sequence is Bifunctional protein HldE (477 aa).

Positions 1 to 319 (MTVIFPNFSK…NIMNSHICTT (319 aa)) are ribokinase. An ATP-binding site is contributed by 195 to 198 (NISE). The active site involves Asp-264. The segment at 346–477 (MTNGVFDILH…NIINAIKRKN (132 aa)) is cytidylyltransferase.

In the N-terminal section; belongs to the carbohydrate kinase PfkB family. It in the C-terminal section; belongs to the cytidylyltransferase family. Homodimer.

It catalyses the reaction D-glycero-beta-D-manno-heptose 7-phosphate + ATP = D-glycero-beta-D-manno-heptose 1,7-bisphosphate + ADP + H(+). The catalysed reaction is D-glycero-beta-D-manno-heptose 1-phosphate + ATP + H(+) = ADP-D-glycero-beta-D-manno-heptose + diphosphate. It participates in nucleotide-sugar biosynthesis; ADP-L-glycero-beta-D-manno-heptose biosynthesis; ADP-L-glycero-beta-D-manno-heptose from D-glycero-beta-D-manno-heptose 7-phosphate: step 1/4. It functions in the pathway nucleotide-sugar biosynthesis; ADP-L-glycero-beta-D-manno-heptose biosynthesis; ADP-L-glycero-beta-D-manno-heptose from D-glycero-beta-D-manno-heptose 7-phosphate: step 3/4. Functionally, catalyzes the phosphorylation of D-glycero-D-manno-heptose 7-phosphate at the C-1 position to selectively form D-glycero-beta-D-manno-heptose-1,7-bisphosphate. Catalyzes the ADP transfer from ATP to D-glycero-beta-D-manno-heptose 1-phosphate, yielding ADP-D-glycero-beta-D-manno-heptose. The polypeptide is Bifunctional protein HldE (Blochmanniella pennsylvanica (strain BPEN)).